The following is a 214-amino-acid chain: Large ribosomal subunit protein bL25 (214 aa).

2 disordered regions span residues 1 to 23 and 182 to 214; these read MSNE…SRRL and DHDQ…ASEE. Residues 200–214 show a composition bias toward acidic residues; the sequence is DDDDAAEGEEAASEE.

This sequence belongs to the bacterial ribosomal protein bL25 family. CTC subfamily. As to quaternary structure, part of the 50S ribosomal subunit; part of the 5S rRNA/L5/L18/L25 subcomplex. Contacts the 5S rRNA. Binds to the 5S rRNA independently of L5 and L18.

Functionally, this is one of the proteins that binds to the 5S RNA in the ribosome where it forms part of the central protuberance. This chain is Large ribosomal subunit protein bL25, found in Alcanivorax borkumensis (strain ATCC 700651 / DSM 11573 / NCIMB 13689 / SK2).